The sequence spans 181 residues: ADP-ribosylation factor 3 (181 aa).

Gly2 carries N-myristoyl glycine lipidation. Residues Gly24–Thr31, Asp67–Gln71, and Asn126–Asp129 each bind GTP.

The protein belongs to the small GTPase superfamily. Arf family. In terms of assembly, interacts with PRKCABP. Interacts with PI4KB and NCS1/FREQ at the Golgi complex.

Its subcellular location is the golgi apparatus. The protein resides in the cytoplasm. It localises to the perinuclear region. Functionally, GTP-binding protein that functions as an allosteric activator of the cholera toxin catalytic subunit, an ADP-ribosyltransferase. Involved in protein trafficking; may modulate vesicle budding and uncoating within the Golgi apparatus. This Bos taurus (Bovine) protein is ADP-ribosylation factor 3 (ARF3).